A 357-amino-acid polypeptide reads, in one-letter code: Inner membrane protein YcfT (357 aa).

Topologically, residues 1-12 (MKQKELWINQIK) are cytoplasmic. A helical membrane pass occupies residues 13-33 (GLCICLVVIYHSVITFYPHLT). The Periplasmic segment spans residues 34–49 (TFQHPLSEVLSKCWIY). Residues 50 to 70 (FNLYLAPFRMPVFFFISGYLI) traverse the membrane as a helical segment. At 71–86 (RRYIDSVPWGNCLDKR) the chain is on the cytoplasmic side. A helical membrane pass occupies residues 87-107 (IWNIFWVLALWGVVQWLALSA). Topologically, residues 108 to 135 (LNQWLAPERDLSNASNAAYADSTGEFLH) are periplasmic. The chain crosses the membrane as a helical span at residues 136–156 (GMITASTSLWYLYALIVYFVV). Residues 157–162 (CKIFSR) lie on the Cytoplasmic side of the membrane. Residues 163–183 (LALPLFALFVLLSVAVNFVPT) traverse the membrane as a helical segment. Residues 184 to 196 (PWWGMNSVIRNLP) lie on the Periplasmic side of the membrane. Residues 197–217 (YYSLGAWFGATIMTCVKEVPL) form a helical membrane-spanning segment. The Cytoplasmic portion of the chain corresponds to 218–231 (RRHLLMASLLTVLA). Residues 232-252 (VGAWLFTISLLLSLVSIVVIM) form a helical membrane-spanning segment. Over 253–310 (KLFYQYEQRFGMRSTSLLNVIGSNTIAIYTTHRILVEIFSLTLLAQMNAARWSPQVEL) the chain is Periplasmic. The helical transmembrane segment at 311 to 331 (TLLLVYPFVSLFICTVAGLLV) threads the bilayer. Topologically, residues 332-357 (RKLSQRAFSDLLFSPPSLPAAVSYSR) are cytoplasmic.

Belongs to the acyltransferase 3 family.

It localises to the cell inner membrane. The polypeptide is Inner membrane protein YcfT (ycfT) (Escherichia coli (strain K12)).